A 39-amino-acid chain; its full sequence is Cytochrome b6-f complex subunit 5 (39 aa).

A helical membrane pass occupies residues 5 to 25 (LLCGIVLGLVPITLLGLFVAA).

The protein belongs to the PetG family. As to quaternary structure, the 4 large subunits of the cytochrome b6-f complex are cytochrome b6, subunit IV (17 kDa polypeptide, PetD), cytochrome f and the Rieske protein, while the 4 small subunits are PetG, PetL, PetM and PetN. The complex functions as a dimer.

Its subcellular location is the cellular thylakoid membrane. Its function is as follows. Component of the cytochrome b6-f complex, which mediates electron transfer between photosystem II (PSII) and photosystem I (PSI), cyclic electron flow around PSI, and state transitions. PetG is required for either the stability or assembly of the cytochrome b6-f complex. This is Cytochrome b6-f complex subunit 5 from Prochlorococcus marinus (strain SARG / CCMP1375 / SS120).